Here is a 273-residue protein sequence, read N- to C-terminus: Undecaprenyl-diphosphatase (273 aa).

The next 8 helical transmembrane spans lie at 3–23 (IIEL…EFAP), 48–68 (GANT…VVVF), 89–109 (LTLM…VLFE), 116–136 (LFST…MIAA), 151–171 (ITYK…WPGF), 192–212 (ADFT…ISLL), 225–245 (FFVV…RFFL), and 253–273 (LVPF…VYFA).

It belongs to the UppP family.

It is found in the cell membrane. It carries out the reaction di-trans,octa-cis-undecaprenyl diphosphate + H2O = di-trans,octa-cis-undecaprenyl phosphate + phosphate + H(+). Catalyzes the dephosphorylation of undecaprenyl diphosphate (UPP). Confers resistance to bacitracin. This chain is Undecaprenyl-diphosphatase, found in Anoxybacillus flavithermus (strain DSM 21510 / WK1).